A 147-amino-acid chain; its full sequence is Ponticulin-like protein C2 (147 aa).

The signal sequence occupies residues 1 to 20 (MKFTKPLLLLIVAIIASSNA). N118 is lipidated: GPI-like-anchor amidated asparagine. Residue N118 is glycosylated (N-linked (GlcNAc...) asparagine). A propeptide spans 119-147 (SSESDSSDSTRIGASFALFALALLSMLAL) (removed in mature form).

The protein belongs to the ponticulin family. In terms of processing, the GPI-like-anchor contains a phosphoceramide group, rather than a phosphatidyl group.

It is found in the cell membrane. The sequence is that of Ponticulin-like protein C2 (ponC2) from Dictyostelium discoideum (Social amoeba).